Reading from the N-terminus, the 43-residue chain is Protein PsbN (43 aa).

A helical transmembrane segment spans residues 5 to 27 (TLVAISISGLLVSFTGYALYTAF).

It belongs to the PsbN family.

It is found in the plastid. It localises to the chloroplast thylakoid membrane. Its function is as follows. May play a role in photosystem I and II biogenesis. The sequence is that of Protein PsbN from Houttuynia cordata (Chameleon plant).